The following is a 957-amino-acid chain: ERC protein 2 (957 aa).

The segment covering 1 to 13 has biased composition (polar residues); sequence MYGSARTISNPEG. Residues 1 to 44 are disordered; that stretch reads MYGSARTISNPEGSPSRSPRLPRSPRLGHRRTSSGGGGGTGKTL. The segment covering 14 to 25 has biased composition (low complexity); the sequence is SPSRSPRLPRSP. Phosphoserine is present on residues serine 65 and serine 666. Positions 140–917 form a coiled coil; the sequence is RQVRDSTMLD…RMKLMADNYD (778 aa). Residues 760–957 are involved in binding to RIMS1; that stretch reads DQNKKVANLK…DQDDEEGIWA (198 aa). Residues 918 to 957 are disordered; sequence DDHHHYHHHHHHHHHRSPGRSQHSNHRPSPDQDDEEGIWA. A compositionally biased stretch (basic residues) spans 922 to 943; the sequence is HYHHHHHHHHHRSPGRSQHSNH. Residues 948-957 are compositionally biased toward acidic residues; it reads DQDDEEGIWA.

In terms of assembly, interacts with BSN, ERC1, PPFIA1, PPFIA2, PPFIA3 and PPFIA4. Interacts through its C-terminus with the PDZ domain of RIMS1. Part of a complex consisting of ERC2, RIMS1 and UNC13A. Predominantly expressed in brain, including hippocampus, cortex, cerebellum, amygdala and olfactory bulb.

It localises to the cytoplasm. The protein localises to the synapse. The protein resides in the presynaptic active zone. Its subcellular location is the cytoskeleton. In terms of biological role, thought to be involved in the organization of the cytomatrix at the nerve terminals active zone (CAZ) which regulates neurotransmitter release. Seems to act together with BSN. May recruit liprin-alpha proteins to the CAZ. This chain is ERC protein 2 (Erc2), found in Rattus norvegicus (Rat).